The following is a 188-amino-acid chain: Elongation factor P (188 aa).

The protein belongs to the elongation factor P family.

It is found in the cytoplasm. It functions in the pathway protein biosynthesis; polypeptide chain elongation. Functionally, involved in peptide bond synthesis. Stimulates efficient translation and peptide-bond synthesis on native or reconstituted 70S ribosomes in vitro. Probably functions indirectly by altering the affinity of the ribosome for aminoacyl-tRNA, thus increasing their reactivity as acceptors for peptidyl transferase. The polypeptide is Elongation factor P (Leptospira biflexa serovar Patoc (strain Patoc 1 / Ames)).